Reading from the N-terminus, the 1271-residue chain is Chitin synthase 4 (1271 aa).

2 disordered regions span residues 1–45 (MPPT…SFDH) and 58–117 (PNHP…ERPS). Residues 21-30 (APDTQESSPA) are compositionally biased toward polar residues. Transmembrane regions (helical) follow at residues 165-185 (WWIR…LVHL) and 201-221 (LAIF…IIFF). Asn407 carries an N-linked (GlcNAc...) asparagine glycan. A helical transmembrane segment spans residues 473–493 (LLLAFSIILIATIASKFLAAL). Asn713 and Asn836 each carry an N-linked (GlcNAc...) asparagine glycan. The next 3 helical transmembrane spans lie at 867–887 (LLGT…VIVV), 894–914 (IPVI…LIFI), and 919–939 (FMLI…SVFL). The segment at 999-1081 (HSESPAPSEK…DKSFIRGSKP (83 aa)) is disordered. Positions 1027-1037 (RSPSFHSSASE) are enriched in polar residues. N-linked (GlcNAc...) asparagine glycans are attached at residues Asn1055 and Asn1161. The DEK-C domain occupies 1213 to 1269 (EVQDEEVLDKLKTWLSKQDLMSVTKRQTREAIYTLFPNAGLQNRAGWLNEQIDKILS).

This sequence belongs to the chitin synthase family.

It is found in the cell membrane. It catalyses the reaction [(1-&gt;4)-N-acetyl-beta-D-glucosaminyl](n) + UDP-N-acetyl-alpha-D-glucosamine = [(1-&gt;4)-N-acetyl-beta-D-glucosaminyl](n+1) + UDP + H(+). Polymerizes chitin, a structural polymer of the cell wall and septum, by transferring the sugar moiety of UDP-GlcNAc to the non-reducing end of the growing chitin polymer. Produces a large proportion of the chitin that is not deacetylated to chitosan. The sequence is that of Chitin synthase 4 from Cryptococcus neoformans var. grubii serotype A (strain H99 / ATCC 208821 / CBS 10515 / FGSC 9487) (Filobasidiella neoformans var. grubii).